Reading from the N-terminus, the 362-residue chain is Cytochrome c oxidase subunit 2 (362 aa).

Positions 1 to 28 (MEQQEKRGTVRKALLGSVIGFGGLALAG) are cleaved as a signal peptide. Cys-29 is lipidated: N-palmitoyl cysteine. Cys-29 is lipidated: S-diacylglycerol cysteine. The next 2 helical transmembrane spans lie at 60–80 (FWVW…GLFI) and 107–127 (IPLE…LFFF). The interval 171–206 (SDYVGTDEKRQEAAEKTKFDQGGDNPNPINGRSKTD) is disordered. A compositionally biased stretch (basic and acidic residues) spans 176–191 (TDEKRQEAAEKTKFDQ). Residues 197-206 (NPINGRSKTD) show a composition bias toward polar residues. Cu cation-binding residues include His-246, Cys-287, Glu-289, Cys-291, His-295, and Met-298. Residues 325 to 362 (NSDALKSIGEAPYATSTHPFNSERATRDGANFDDTAAA) form a disordered region.

The protein belongs to the cytochrome c oxidase subunit 2 family. In terms of assembly, associates with subunits I, III and IV to form cytochrome c oxidase. Binuclear copper center (CuA) is required as a cofactor.

It is found in the cell membrane. It carries out the reaction 4 Fe(II)-[cytochrome c] + O2 + 8 H(+)(in) = 4 Fe(III)-[cytochrome c] + 2 H2O + 4 H(+)(out). Its function is as follows. Subunits I and II form the functional core of the enzyme complex. Electrons originating in cytochrome c are transferred via heme a and Cu(A) to the binuclear center formed by heme a3 and Cu(B). The sequence is that of Cytochrome c oxidase subunit 2 (ctaC) from Corynebacterium diphtheriae (strain ATCC 700971 / NCTC 13129 / Biotype gravis).